The primary structure comprises 266 residues: Cell division cycle-associated protein 3 (266 aa).

Residues 1–84 (MGSTQSVSGT…TPMKISGPDP (84 aa)) are disordered. Phosphoserine is present on residues serine 29 and serine 31. Over residues 32–46 (AGIQRTPIQVESSPQ) the composition is skewed to polar residues. The residue at position 37 (threonine 37) is a Phosphothreonine. Residues serine 44 and serine 67 each carry the phosphoserine modification. At threonine 75 the chain carries Phosphothreonine. The tract at residues 90-119 (KELSEVLETEASESISSPELALPRETPLFY) is F-box-like. Position 93 is a phosphoserine (serine 93). Disordered stretches follow at residues 120-225 (DLDL…LSEN) and 242-266 (KAGG…LLES). Basic and acidic residues predominate over residues 143-156 (LDPKQVFTKEEAKQ). A compositionally biased stretch (polar residues) spans 157–168 (SAETIAASQNSD). At serine 197 the chain carries Phosphoserine. Phosphothreonine is present on threonine 200. Residues 203–213 (QDDNSPGTLTL) show a composition bias toward polar residues. Residue serine 207 is modified to Phosphoserine. The residue at position 210 (threonine 210) is a Phosphothreonine. A compositionally biased stretch (basic and acidic residues) spans 250 to 259 (PNQDHDKENQ). The KEN box signature appears at 256–258 (KEN).

Interacts with SKP1. Part of a SCF (SKP1-cullin-F-box) protein ligase complex. In terms of processing, ubiquitinated and degraded by the APC/C-Cdh1 complex.

Its subcellular location is the cytoplasm. It is found in the cytosol. The protein operates within protein modification; protein ubiquitination. Functionally, F-box-like protein which is required for entry into mitosis. Acts by participating in E3 ligase complexes that mediate the ubiquitination and degradation of WEE1 kinase at G2/M phase. The sequence is that of Cell division cycle-associated protein 3 (Cdca3) from Mus musculus (Mouse).